A 779-amino-acid polypeptide reads, in one-letter code: MELSLVRLWNTCFPSFFYISTVLFLLTGGGVYSHSEYLIGLGSYDITGPAADVNMMGYANMEQVASGIHFRLRARTFIVSEPQGKRVVFVNLDACMASQIVKLKVIERLKARYGDLYTEQNVGISGIHTHAGPGGYLQYVVYIVTSLGFVRQSFDALVDGIENSIIQAHENLRPGSIFLNNGELLDAGVNRSPSAYLNNPSKERSKHKYNVDKEMTLLKFVDDQWGPVGSFNWFATHGTSMSRTNSLISGDNKGAASRFMEDWYEQNTAERSYSEEFISDEIPRRVSSLIENHQDSHHELLELASYFESQPGKPVTRISSSARRVRSALRKADKPGFVSAFCQTNCGDVSPNVLGAFCLDTGLPCDFNHSTCGGKNEMCYGRGPGYPDEFESTRIIGERQFKMALELFNKASEQLQGKVDYRHVYVDFSQLNVTLPKKDGKSEVVKTCPAAMGFAFAAGTTDGPGAFDFTQGDDKGNPFWRLVRNVLKTPDKKQIDCHYPKPILLDTGEMTKPYDWAPSILSLQVLRIGQLFILSVPGEFTTMAGRRLRYAVKTQLKNSGNKDLSGEIHVVIAGLANGYSQYVTTFEEYQVQRYEGASTLYGPHTLSGYIQEFKKLSKSLVLDMPVQPGPQPPDLLDKQLSFLTPVMMDTTPSGDSFGDVISDVPKNLSLKRGNGQVTVVFRSACPRNDLLTEGTFTLVERLEQKDKTWTPVYDDDDLCLRFKWSRHKKLSSRSQATVEWRIPESASPGVYRITHFGAAKKLFGSVHHFTGSSSAFVVT.

The active-site Nucleophile is the S350. N-linked (GlcNAc...) asparagine glycosylation is found at N368, N432, and N667.

Belongs to the neutral ceramidase family. As to expression, mostly expressed in stems, leaves, roots and siliques, and, to a lower extent, in flowers.

The protein resides in the secreted. It is found in the endoplasmic reticulum. The protein localises to the golgi apparatus. The enzyme catalyses an N-acylsphing-4-enine + H2O = sphing-4-enine + a fatty acid. Functionally, hydrolyzes the sphingolipid ceramide into sphingosine and free fatty acid. Regulates sphingolipid homeostasis. Promotes oxidative stress resistance. The sequence is that of Neutral ceramidase 1 from Arabidopsis thaliana (Mouse-ear cress).